Consider the following 540-residue polypeptide: Acyl-CoA synthetase 7 (540 aa).

ATP contacts are provided by residues 186–194 (SSGTTGKPK), Asp415, Arg430, and Lys522. Residues 538–540 (AKL) carry the Microbody targeting signal motif.

Belongs to the ATP-dependent AMP-binding enzyme family. Expressed in intestine.

The protein resides in the peroxisome. The enzyme catalyses nonanoate + ATP + CoA = nonanoyl-CoA + AMP + diphosphate. It carries out the reaction IC-asc-C7 + ATP + CoA = IC-asc-C7-CoA + AMP + diphosphate. The catalysed reaction is IC-asc-C9 + ATP + CoA = IC-asc-C9-CoA + AMP + diphosphate. Plays a role in ascaroside pheromones biosynthesis, which regulates development and behavior. Specifically, activates the side chain of medium-chain indol-3-carbonyl (IC)-ascarosides for shortening through beta-oxidation. Converts IC-asc-C7 and IC-asc-C9 into IC-asc-C7-CoA and IC-asc-C9-CoA, respectively. May play a role in fatty-acid metabolism by activating and converting nonanoate (C9) into nonanoyl-CoA (C9-CoA). This is Acyl-CoA synthetase 7 from Caenorhabditis elegans.